The chain runs to 118 residues: Co-chaperonin GroES (118 aa).

It belongs to the GroES chaperonin family. In terms of assembly, heptamer of 7 subunits arranged in a ring. Interacts with the chaperonin GroEL.

The protein localises to the cytoplasm. Its function is as follows. Together with the chaperonin GroEL, plays an essential role in assisting protein folding. The GroEL-GroES system forms a nano-cage that allows encapsulation of the non-native substrate proteins and provides a physical environment optimized to promote and accelerate protein folding. GroES binds to the apical surface of the GroEL ring, thereby capping the opening of the GroEL channel. The sequence is that of Co-chaperonin GroES from Helicobacter pylori (strain Shi470).